We begin with the raw amino-acid sequence, 527 residues long: Glutamate--cysteine ligase (527 aa).

It belongs to the glutamate--cysteine ligase type 1 family. Type 1 subfamily.

The catalysed reaction is L-cysteine + L-glutamate + ATP = gamma-L-glutamyl-L-cysteine + ADP + phosphate + H(+). Its pathway is sulfur metabolism; glutathione biosynthesis; glutathione from L-cysteine and L-glutamate: step 1/2. The polypeptide is Glutamate--cysteine ligase (Pseudomonas aeruginosa (strain ATCC 15692 / DSM 22644 / CIP 104116 / JCM 14847 / LMG 12228 / 1C / PRS 101 / PAO1)).